Consider the following 159-residue polypeptide: Endoribonuclease YbeY (159 aa).

The Zn(2+) site is built by His125, His129, and His135.

Belongs to the endoribonuclease YbeY family. It depends on Zn(2+) as a cofactor.

It is found in the cytoplasm. In terms of biological role, single strand-specific metallo-endoribonuclease involved in late-stage 70S ribosome quality control and in maturation of the 3' terminus of the 16S rRNA. This chain is Endoribonuclease YbeY, found in Enterococcus faecalis (strain ATCC 700802 / V583).